Here is a 372-residue protein sequence, read N- to C-terminus: Alanine dehydrogenase 1 (372 aa).

Histidine 94 is an active-site residue. 170–200 (TYVIFGGGVAATNAANVALGLNAKVIIIELN) contributes to the NAD(+) binding site.

It belongs to the AlaDH/PNT family.

It carries out the reaction L-alanine + NAD(+) + H2O = pyruvate + NH4(+) + NADH + H(+). The protein operates within amino-acid degradation; L-alanine degradation via dehydrogenase pathway; NH(3) and pyruvate from L-alanine: step 1/1. Functionally, may play a role in cell wall synthesis as L-alanine is an important constituent of the peptidoglycan layer. This chain is Alanine dehydrogenase 1 (ald1), found in Staphylococcus aureus (strain MSSA476).